We begin with the raw amino-acid sequence, 218 residues long: Adenylate kinase (218 aa).

10–15 (GAGKGT) is an ATP binding site. The NMP stretch occupies residues 30-59 (STGDMLRAAVKEETPLGRKAKEVMDSGNLV). AMP is bound by residues T31, R36, 57 to 59 (NLV), 85 to 88 (GFPR), and Q92. Residues 122-159 (GRRVHPASGRTYHLTFNPPQQQGVDDETGEPLIQRVDD) are LID. Residues R123 and 132–133 (TY) each bind ATP. The AMP site is built by R156 and R167. ATP is bound at residue G203.

Belongs to the adenylate kinase family. As to quaternary structure, monomer.

It is found in the cytoplasm. It catalyses the reaction AMP + ATP = 2 ADP. Its pathway is purine metabolism; AMP biosynthesis via salvage pathway; AMP from ADP: step 1/1. In terms of biological role, catalyzes the reversible transfer of the terminal phosphate group between ATP and AMP. Plays an important role in cellular energy homeostasis and in adenine nucleotide metabolism. In Chlorobium phaeovibrioides (strain DSM 265 / 1930) (Prosthecochloris vibrioformis (strain DSM 265)), this protein is Adenylate kinase.